Reading from the N-terminus, the 211-residue chain is Pyridoxine/pyridoxamine 5'-phosphate oxidase (211 aa).

Substrate-binding positions include 8 to 11 and Lys66; that span reads RNEY. FMN-binding positions include 61–66, 76–77, Lys83, and Gln105; these read RVVLLK and FT. Residues Tyr123, Arg127, and Ser131 each contribute to the substrate site. Residues 140 to 141 and Trp184 contribute to the FMN site; that span reads QS. Position 190 to 192 (190 to 192) interacts with substrate; it reads RLH. FMN is bound at residue Arg194.

This sequence belongs to the pyridoxamine 5'-phosphate oxidase family. Homodimer. Requires FMN as cofactor.

It catalyses the reaction pyridoxamine 5'-phosphate + O2 + H2O = pyridoxal 5'-phosphate + H2O2 + NH4(+). It carries out the reaction pyridoxine 5'-phosphate + O2 = pyridoxal 5'-phosphate + H2O2. It functions in the pathway cofactor metabolism; pyridoxal 5'-phosphate salvage; pyridoxal 5'-phosphate from pyridoxamine 5'-phosphate: step 1/1. It participates in cofactor metabolism; pyridoxal 5'-phosphate salvage; pyridoxal 5'-phosphate from pyridoxine 5'-phosphate: step 1/1. Functionally, catalyzes the oxidation of either pyridoxine 5'-phosphate (PNP) or pyridoxamine 5'-phosphate (PMP) into pyridoxal 5'-phosphate (PLP). The protein is Pyridoxine/pyridoxamine 5'-phosphate oxidase of Mannheimia succiniciproducens (strain KCTC 0769BP / MBEL55E).